Here is a 422-residue protein sequence, read N- to C-terminus: Serine hydroxymethyltransferase (422 aa).

(6S)-5,6,7,8-tetrahydrofolate is bound by residues L121 and G125–L127. K230 carries the N6-(pyridoxal phosphate)lysine modification. (6S)-5,6,7,8-tetrahydrofolate is bound at residue S355–F357.

Belongs to the SHMT family. As to quaternary structure, homodimer. Pyridoxal 5'-phosphate is required as a cofactor.

Its subcellular location is the cytoplasm. It carries out the reaction (6R)-5,10-methylene-5,6,7,8-tetrahydrofolate + glycine + H2O = (6S)-5,6,7,8-tetrahydrofolate + L-serine. The protein operates within one-carbon metabolism; tetrahydrofolate interconversion. Its pathway is amino-acid biosynthesis; glycine biosynthesis; glycine from L-serine: step 1/1. Its function is as follows. Catalyzes the reversible interconversion of serine and glycine with tetrahydrofolate (THF) serving as the one-carbon carrier. This reaction serves as the major source of one-carbon groups required for the biosynthesis of purines, thymidylate, methionine, and other important biomolecules. Also exhibits THF-independent aldolase activity toward beta-hydroxyamino acids, producing glycine and aldehydes, via a retro-aldol mechanism. This is Serine hydroxymethyltransferase from Teredinibacter turnerae (strain ATCC 39867 / T7901).